The chain runs to 303 residues: N-acetyl-D-glucosamine kinase (303 aa).

Residues 4 to 11 (GFDIGGTK) and 133 to 140 (GVGGGLIF) contribute to the ATP site. The Zn(2+) site is built by H157, C177, C179, and C184.

It belongs to the ROK (NagC/XylR) family. NagK subfamily.

It catalyses the reaction N-acetyl-D-glucosamine + ATP = N-acetyl-D-glucosamine 6-phosphate + ADP + H(+). It participates in cell wall biogenesis; peptidoglycan recycling. Its function is as follows. Catalyzes the phosphorylation of N-acetyl-D-glucosamine (GlcNAc) derived from cell-wall degradation, yielding GlcNAc-6-P. The chain is N-acetyl-D-glucosamine kinase from Escherichia fergusonii (strain ATCC 35469 / DSM 13698 / CCUG 18766 / IAM 14443 / JCM 21226 / LMG 7866 / NBRC 102419 / NCTC 12128 / CDC 0568-73).